The following is a 314-amino-acid chain: tRNA dimethylallyltransferase 2 (314 aa).

Gly-8–Ser-15 contacts ATP. Substrate is bound at residue Thr-10–Ser-15.

This sequence belongs to the IPP transferase family. Monomer. Mg(2+) is required as a cofactor.

It catalyses the reaction adenosine(37) in tRNA + dimethylallyl diphosphate = N(6)-dimethylallyladenosine(37) in tRNA + diphosphate. Catalyzes the transfer of a dimethylallyl group onto the adenine at position 37 in tRNAs that read codons beginning with uridine, leading to the formation of N6-(dimethylallyl)adenosine (i(6)A). In Mycobacterium ulcerans (strain Agy99), this protein is tRNA dimethylallyltransferase 2.